Consider the following 338-residue polypeptide: tRNA N6-adenosine threonylcarbamoyltransferase (338 aa).

Fe cation-binding residues include H111 and H115. Substrate-binding positions include 134–138 (LLSGG), D167, G180, and N275. D304 provides a ligand contact to Fe cation.

The protein belongs to the KAE1 / TsaD family. Fe(2+) serves as cofactor.

It is found in the cytoplasm. It carries out the reaction L-threonylcarbamoyladenylate + adenosine(37) in tRNA = N(6)-L-threonylcarbamoyladenosine(37) in tRNA + AMP + H(+). Functionally, required for the formation of a threonylcarbamoyl group on adenosine at position 37 (t(6)A37) in tRNAs that read codons beginning with adenine. Is involved in the transfer of the threonylcarbamoyl moiety of threonylcarbamoyl-AMP (TC-AMP) to the N6 group of A37, together with TsaE and TsaB. TsaD likely plays a direct catalytic role in this reaction. This Leptospira interrogans serogroup Icterohaemorrhagiae serovar copenhageni (strain Fiocruz L1-130) protein is tRNA N6-adenosine threonylcarbamoyltransferase.